We begin with the raw amino-acid sequence, 262 residues long: Indole-3-glycerol phosphate synthase (262 aa).

It belongs to the TrpC family.

The catalysed reaction is 1-(2-carboxyphenylamino)-1-deoxy-D-ribulose 5-phosphate + H(+) = (1S,2R)-1-C-(indol-3-yl)glycerol 3-phosphate + CO2 + H2O. Its pathway is amino-acid biosynthesis; L-tryptophan biosynthesis; L-tryptophan from chorismate: step 4/5. In Nitratiruptor sp. (strain SB155-2), this protein is Indole-3-glycerol phosphate synthase.